The following is a 567-amino-acid chain: Dihydrolipoyl dehydrogenase 2, chloroplastic (567 aa).

The transit peptide at 1–67 (MQSVLSLSFS…HIQSRRIEVS (67 aa)) directs the protein to the chloroplast. FAD is bound by residues 114-122 (EGDVVGGTC), lysine 131, glycine 197, and 221-223 (TGS). A disulfide bridge links cysteine 122 with cysteine 127. Residues 258–265 (GSGYIGLE), glutamate 281, and glycine 354 contribute to the NAD(+) site. FAD-binding positions include aspartate 400 and 406-409 (MLAH). Residue histidine 536 is the Proton acceptor of the active site.

Belongs to the class-I pyridine nucleotide-disulfide oxidoreductase family. As to quaternary structure, homodimer. Part of the plastidial pyruvate dehydrogenase complex (PDC) containing multiple copies of three enzymatic components: pyruvate dehydrogenase (E1), dihydrolipoamide acetyltransferase (E2) and lipoamide dehydrogenase (E3). Requires FAD as cofactor. Expressed mainly in flower buds and immature siliques, and to a lesser extent in flowers.

The protein resides in the plastid. It is found in the chloroplast stroma. It catalyses the reaction N(6)-[(R)-dihydrolipoyl]-L-lysyl-[protein] + NAD(+) = N(6)-[(R)-lipoyl]-L-lysyl-[protein] + NADH + H(+). Its function is as follows. Lipoamide dehydrogenase is a component of the plastidial pyruvate dehydrogenase complex (PDC). This Arabidopsis thaliana (Mouse-ear cress) protein is Dihydrolipoyl dehydrogenase 2, chloroplastic (LPD2).